A 384-amino-acid polypeptide reads, in one-letter code: Queuine tRNA-ribosyltransferase (384 aa).

The active-site Proton acceptor is the Asp-92. Residues 92 to 96, Asp-146, Gln-190, and Gly-217 each bind substrate; that span reads DSGGF. The tract at residues 248–254 is RNA binding; the sequence is GVGRPED. Asp-267 functions as the Nucleophile in the catalytic mechanism. Positions 272 to 276 are RNA binding; important for wobble base 34 recognition; sequence TRHAR. Zn(2+) contacts are provided by Cys-305, Cys-307, Cys-310, and His-337.

The protein belongs to the queuine tRNA-ribosyltransferase family. Homodimer. Within each dimer, one monomer is responsible for RNA recognition and catalysis, while the other monomer binds to the replacement base PreQ1. Requires Zn(2+) as cofactor.

The catalysed reaction is 7-aminomethyl-7-carbaguanine + guanosine(34) in tRNA = 7-aminomethyl-7-carbaguanosine(34) in tRNA + guanine. Its pathway is tRNA modification; tRNA-queuosine biosynthesis. In terms of biological role, catalyzes the base-exchange of a guanine (G) residue with the queuine precursor 7-aminomethyl-7-deazaguanine (PreQ1) at position 34 (anticodon wobble position) in tRNAs with GU(N) anticodons (tRNA-Asp, -Asn, -His and -Tyr). Catalysis occurs through a double-displacement mechanism. The nucleophile active site attacks the C1' of nucleotide 34 to detach the guanine base from the RNA, forming a covalent enzyme-RNA intermediate. The proton acceptor active site deprotonates the incoming PreQ1, allowing a nucleophilic attack on the C1' of the ribose to form the product. After dissociation, two additional enzymatic reactions on the tRNA convert PreQ1 to queuine (Q), resulting in the hypermodified nucleoside queuosine (7-(((4,5-cis-dihydroxy-2-cyclopenten-1-yl)amino)methyl)-7-deazaguanosine). This Xylella fastidiosa (strain 9a5c) protein is Queuine tRNA-ribosyltransferase.